The sequence spans 377 residues: Nitric oxide reductase FlRd-NAD(+) reductase (377 aa).

Belongs to the FAD-dependent oxidoreductase family. Requires FAD as cofactor.

It localises to the cytoplasm. It catalyses the reaction 2 reduced [nitric oxide reductase rubredoxin domain] + NAD(+) + H(+) = 2 oxidized [nitric oxide reductase rubredoxin domain] + NADH. It functions in the pathway nitrogen metabolism; nitric oxide reduction. Its function is as follows. One of at least two accessory proteins for anaerobic nitric oxide (NO) reductase. Reduces the rubredoxin moiety of NO reductase. The protein is Nitric oxide reductase FlRd-NAD(+) reductase of Salmonella typhi.